The sequence spans 223 residues: Small ribosomal subunit protein uS3 (223 aa).

The region spanning 39-117 (IREFLRKKPS…RPELNAKLVA (79 aa)) is the KH type-2 domain.

Belongs to the universal ribosomal protein uS3 family. In terms of assembly, part of the 30S ribosomal subunit. Forms a tight complex with proteins S10 and S14.

In terms of biological role, binds the lower part of the 30S subunit head. Binds mRNA in the 70S ribosome, positioning it for translation. The sequence is that of Small ribosomal subunit protein uS3 from Chlamydia abortus (strain DSM 27085 / S26/3) (Chlamydophila abortus).